The primary structure comprises 481 residues: Multiple inositol polyphosphate phosphatase 1 (481 aa).

A signal peptide spans 1-30 (MLRGARSHLPASVAPAAVLAAALLSSFARC). Histidine 89 is an active-site residue. 2 N-linked (GlcNAc...) asparagine glycosylation sites follow: asparagine 236 and asparagine 475. The Prevents secretion from ER signature appears at 478–481 (SDEL).

It belongs to the histidine acid phosphatase family. MINPP1 subfamily. N-glycosylated. As to expression, widely expressed with highest levels in kidney, intestine, thymus and liver.

It localises to the endoplasmic reticulum lumen. It is found in the secreted. The protein localises to the cell membrane. It catalyses the reaction 1D-myo-inositol hexakisphosphate + H2O = 1D-myo-inositol 1,2,4,5,6-pentakisphosphate + phosphate. The enzyme catalyses 1D-myo-inositol 1,2,4,5,6-pentakisphosphate + H2O = 1D-myo-inositol 1,2,5,6-tetrakisphosphate + phosphate. It carries out the reaction 1D-myo-inositol 1,2,5,6-tetrakisphosphate + H2O = 1D-myo-inositol 1,2,6-trisphosphate + phosphate. The catalysed reaction is 1D-myo-inositol 1,2,6-trisphosphate + H2O = 1D-myo-inositol 1,2-bisphosphate + phosphate. It catalyses the reaction 1D-myo-inositol 1,2-bisphosphate + H2O = 1D-myo-inositol 2-phosphate + phosphate. The enzyme catalyses 1D-myo-inositol hexakisphosphate + H2O = 1D-myo-inositol 1,2,3,5,6-pentakisphosphate + phosphate. It carries out the reaction 1D-myo-inositol 1,2,3,5,6-pentakisphosphate + H2O = 1D-myo-inositol 1,2,3,6-tetrakisphosphate + phosphate. The catalysed reaction is 1D-myo-inositol 1,2,3,6-tetrakisphosphate + H2O = 1D-myo-inositol 1,2,3-trisphosphate + phosphate. It catalyses the reaction 1D-myo-inositol 1,2,3-trisphosphate + H2O = 1D-myo-inositol 2,3-bisphosphate + phosphate. The enzyme catalyses 1D-myo-inositol 2,3-bisphosphate + H2O = 1D-myo-inositol 2-phosphate + phosphate. It carries out the reaction 1D-myo-inositol 1,3,4,5,6-pentakisphosphate + H2O = 1D-myo-inositol 1,4,5,6-tetrakisphosphate + phosphate. The catalysed reaction is 1D-myo-inositol 1,4,5,6-tetrakisphosphate + H2O = 1D-myo-inositol 1,4,5-trisphosphate + phosphate. It catalyses the reaction (2R)-2,3-bisphosphoglycerate + H2O = (2R)-2-phosphoglycerate + phosphate. Functionally, multiple inositol polyphosphate phosphatase that hydrolyzes 1D-myo-inositol 1,3,4,5,6-pentakisphosphate (InsP5[2OH]) and 1D-myo-inositol hexakisphosphate (InsP6) to a range of less phosphorylated inositol phosphates. This regulates the availability of these various small molecule second messengers and metal chelators which control many aspects of cell physiology. Has a weak in vitro activity towards 1D-myo-inositol 1,4,5-trisphosphate which is unlikely to be physiologically relevant. By regulating intracellular inositol polyphosphates pools, which act as metal chelators, it may control the availability of intracellular calcium and iron, which are important for proper neuronal development and homeostasis. May have a dual substrate specificity, and function as a 2,3-bisphosphoglycerate 3-phosphatase hydrolyzing 2,3-bisphosphoglycerate to 2-phosphoglycerate. 2,3-bisphosphoglycerate (BPG) is formed as part of the Rapoport-Luebering glycolytic bypass and is a regulator of systemic oxygen homeostasis as the major allosteric effector of hemoglobin. This is Multiple inositol polyphosphate phosphatase 1 from Mus musculus (Mouse).